The sequence spans 247 residues: MMNESQPKLKYKRILLKFSGEALMGKSQFGIDPSVLDSLARDIAELIHMGVEVGLVLGGGNLFRGKALSQAGVGRVTGDHMGMLATVMNALALRDALERIDLPARIMSAIPMLGVVDPYHRRKAITHLRNGQVVIFAAGTGNPFFTTDTAACLRAIEIGADIVLKATKVDGVYSADPLKNPDAKRYDYLTYKEVLTKGLEVMDSTAICLCQDQGMPLQVFDMAAPKALKRIVTGERVGTIVGANHDQ.

17–20 contributes to the ATP binding site; that stretch reads KFSG. Residue Gly-59 coordinates UMP. Residues Gly-60 and Arg-64 each coordinate ATP. UMP-binding positions include Asp-79 and 140–147; that span reads TGNPFFTT. Residues Thr-167, Tyr-173, and Asp-176 each contribute to the ATP site.

It belongs to the UMP kinase family. In terms of assembly, homohexamer.

The protein localises to the cytoplasm. It carries out the reaction UMP + ATP = UDP + ADP. It participates in pyrimidine metabolism; CTP biosynthesis via de novo pathway; UDP from UMP (UMPK route): step 1/1. Inhibited by UTP. In terms of biological role, catalyzes the reversible phosphorylation of UMP to UDP. The chain is Uridylate kinase from Legionella pneumophila (strain Lens).